The sequence spans 336 residues: Zinc-type alcohol dehydrogenase-like protein SE_1777 (336 aa).

This sequence belongs to the zinc-containing alcohol dehydrogenase family. Quinone oxidoreductase subfamily.

The polypeptide is Zinc-type alcohol dehydrogenase-like protein SE_1777 (Staphylococcus epidermidis (strain ATCC 12228 / FDA PCI 1200)).